Here is a 334-residue protein sequence, read N- to C-terminus: MTESDERSLRDLLLESADDLENVLKMIIDTLINREKSVMLKSGESVTNIVRLFDAKQESVRKLLQKVPEFQERESLIRTLKAHVEKRDEVIQQVENNLKACEVALTRSCFHANQKVKKMNEAALRPVNSETLIKLSHQISKHNSVSAPLTWQIGDPSRPFPQEHEFRTGQLLNPKIQSSGPQILLGKSSAQKPIIASPSASSSNGGTAPTRTVGTPLVNSATNGDYSPRTGYGAEETSPIQEQVLLGVTPNEKQWQNPPMPGAATSSQSPLSGAPQSPSSPSVKLKISGIPNRPGDIDQVQEVRDVEQMSSDSSNSSDSSDDEGSSKKTRGRNK.

Residues 76–100 (LIRTLKAHVEKRDEVIQQVENNLKA) are a coiled coil. The span at 188 to 203 (SSAQKPIIASPSASSS) shows a compositional bias: low complexity. 2 disordered regions span residues 188 to 234 (SSAQ…GYGA) and 252 to 334 (EKQW…GRNK). 2 stretches are compositionally biased toward polar residues: residues 204–225 (NGGT…TNGD) and 264–282 (ATSS…SSPS).

This sequence belongs to the Mediator complex subunit 4 family. As to quaternary structure, component of the Mediator complex.

The protein localises to the nucleus. In terms of biological role, component of the Mediator complex, a coactivator involved in the regulated transcription of nearly all RNA polymerase II-dependent genes. Mediator functions as a bridge to convey information from gene-specific regulatory proteins to the basal RNA polymerase II transcription machinery. Mediator is recruited to promoters by direct interactions with regulatory proteins and serves as a scaffold for the assembly of a functional preinitiation complex with RNA polymerase II and the general transcription factors. The sequence is that of Mediator of RNA polymerase II transcription subunit 4 (mdt-4) from Caenorhabditis briggsae.